The sequence spans 347 residues: NADH-ubiquinone oxidoreductase chain 2 (347 aa).

The next 11 helical transmembrane spans lie at 3 to 23, 25 to 45, 59 to 79, 96 to 116, 122 to 142, 149 to 169, 178 to 198, 201 to 221, 237 to 257, 274 to 294, and 323 to 343; these read PPIF…VMTS, HWML…PILM, YFLT…INLL, ILMT…FWVP, ISLS…LSIL, INPH…GWGG, IMAY…LYNP, MFLN…LFML, APLI…LPPL, EMII…YFYM, and TIFL…TPMI.

The protein belongs to the complex I subunit 2 family. Core subunit of respiratory chain NADH dehydrogenase (Complex I) which is composed of 45 different subunits. Interacts with TMEM242.

The protein resides in the mitochondrion inner membrane. The enzyme catalyses a ubiquinone + NADH + 5 H(+)(in) = a ubiquinol + NAD(+) + 4 H(+)(out). Core subunit of the mitochondrial membrane respiratory chain NADH dehydrogenase (Complex I) which catalyzes electron transfer from NADH through the respiratory chain, using ubiquinone as an electron acceptor. Essential for the catalytic activity and assembly of complex I. In Viverra tangalunga (Malayan civet), this protein is NADH-ubiquinone oxidoreductase chain 2.